Here is a 279-residue protein sequence, read N- to C-terminus: Formamidopyrimidine-DNA glycosylase (279 aa).

The active-site Schiff-base intermediate with DNA is the P2. E3 (proton donor) is an active-site residue. K58 functions as the Proton donor; for beta-elimination activity in the catalytic mechanism. Residues H92, R111, and R153 each coordinate DNA. An FPG-type zinc finger spans residues 238 to 272; it reads TVYGKEGQSCLSCSSTIIKTKHSGRSTFYCKTCQY. Residue R262 is the Proton donor; for delta-elimination activity of the active site.

It belongs to the FPG family. Monomer. Requires Zn(2+) as cofactor.

The catalysed reaction is Hydrolysis of DNA containing ring-opened 7-methylguanine residues, releasing 2,6-diamino-4-hydroxy-5-(N-methyl)formamidopyrimidine.. It carries out the reaction 2'-deoxyribonucleotide-(2'-deoxyribose 5'-phosphate)-2'-deoxyribonucleotide-DNA = a 3'-end 2'-deoxyribonucleotide-(2,3-dehydro-2,3-deoxyribose 5'-phosphate)-DNA + a 5'-end 5'-phospho-2'-deoxyribonucleoside-DNA + H(+). In terms of biological role, involved in base excision repair of DNA damaged by oxidation or by mutagenic agents. Acts as a DNA glycosylase that recognizes and removes damaged bases. Has a preference for oxidized purines, such as 7,8-dihydro-8-oxoguanine (8-oxoG). Has AP (apurinic/apyrimidinic) lyase activity and introduces nicks in the DNA strand. Cleaves the DNA backbone by beta-delta elimination to generate a single-strand break at the site of the removed base with both 3'- and 5'-phosphates. This chain is Formamidopyrimidine-DNA glycosylase, found in Rickettsia massiliae (strain Mtu5).